The chain runs to 145 residues: D-aminoacyl-tRNA deacylase (145 aa).

A Gly-cisPro motif, important for rejection of L-amino acids motif is present at residues 137 to 138 (GP).

It belongs to the DTD family. Homodimer.

Its subcellular location is the cytoplasm. The catalysed reaction is glycyl-tRNA(Ala) + H2O = tRNA(Ala) + glycine + H(+). The enzyme catalyses a D-aminoacyl-tRNA + H2O = a tRNA + a D-alpha-amino acid + H(+). Its function is as follows. An aminoacyl-tRNA editing enzyme that deacylates mischarged D-aminoacyl-tRNAs. Also deacylates mischarged glycyl-tRNA(Ala), protecting cells against glycine mischarging by AlaRS. Acts via tRNA-based rather than protein-based catalysis; rejects L-amino acids rather than detecting D-amino acids in the active site. By recycling D-aminoacyl-tRNA to D-amino acids and free tRNA molecules, this enzyme counteracts the toxicity associated with the formation of D-aminoacyl-tRNA entities in vivo and helps enforce protein L-homochirality. The polypeptide is D-aminoacyl-tRNA deacylase (Pseudomonas putida (strain W619)).